Reading from the N-terminus, the 122-residue chain is Large ribosomal subunit protein bL12 (122 aa).

Belongs to the bacterial ribosomal protein bL12 family. As to quaternary structure, homodimer. Part of the ribosomal stalk of the 50S ribosomal subunit. Forms a multimeric L10(L12)X complex, where L10 forms an elongated spine to which 2 to 4 L12 dimers bind in a sequential fashion. Binds GTP-bound translation factors.

Its function is as follows. Forms part of the ribosomal stalk which helps the ribosome interact with GTP-bound translation factors. Is thus essential for accurate translation. The polypeptide is Large ribosomal subunit protein bL12 (Streptococcus pneumoniae serotype 19F (strain G54)).